We begin with the raw amino-acid sequence, 275 residues long: 4-hydroxy-3-methylbut-2-enyl diphosphate reductase (275 aa).

Cys-12 provides a ligand contact to [4Fe-4S] cluster. Residues His-36 and His-70 each coordinate (2E)-4-hydroxy-3-methylbut-2-enyl diphosphate. Positions 36 and 70 each coordinate dimethylallyl diphosphate. 2 residues coordinate isopentenyl diphosphate: His-36 and His-70. Cys-92 provides a ligand contact to [4Fe-4S] cluster. His-120 is a (2E)-4-hydroxy-3-methylbut-2-enyl diphosphate binding site. His-120 contributes to the dimethylallyl diphosphate binding site. Residue His-120 participates in isopentenyl diphosphate binding. The active-site Proton donor is Glu-122. Thr-157 contributes to the (2E)-4-hydroxy-3-methylbut-2-enyl diphosphate binding site. Cys-185 provides a ligand contact to [4Fe-4S] cluster. Residues Ser-213, Ser-214, Asn-215, and Ser-257 each coordinate (2E)-4-hydroxy-3-methylbut-2-enyl diphosphate. Positions 213, 214, 215, and 257 each coordinate dimethylallyl diphosphate. 4 residues coordinate isopentenyl diphosphate: Ser-213, Ser-214, Asn-215, and Ser-257.

Belongs to the IspH family. It depends on [4Fe-4S] cluster as a cofactor.

The catalysed reaction is isopentenyl diphosphate + 2 oxidized [2Fe-2S]-[ferredoxin] + H2O = (2E)-4-hydroxy-3-methylbut-2-enyl diphosphate + 2 reduced [2Fe-2S]-[ferredoxin] + 2 H(+). It catalyses the reaction dimethylallyl diphosphate + 2 oxidized [2Fe-2S]-[ferredoxin] + H2O = (2E)-4-hydroxy-3-methylbut-2-enyl diphosphate + 2 reduced [2Fe-2S]-[ferredoxin] + 2 H(+). It participates in isoprenoid biosynthesis; dimethylallyl diphosphate biosynthesis; dimethylallyl diphosphate from (2E)-4-hydroxy-3-methylbutenyl diphosphate: step 1/1. The protein operates within isoprenoid biosynthesis; isopentenyl diphosphate biosynthesis via DXP pathway; isopentenyl diphosphate from 1-deoxy-D-xylulose 5-phosphate: step 6/6. Functionally, catalyzes the conversion of 1-hydroxy-2-methyl-2-(E)-butenyl 4-diphosphate (HMBPP) into a mixture of isopentenyl diphosphate (IPP) and dimethylallyl diphosphate (DMAPP). Acts in the terminal step of the DOXP/MEP pathway for isoprenoid precursor biosynthesis. This chain is 4-hydroxy-3-methylbut-2-enyl diphosphate reductase, found in Nitratiruptor sp. (strain SB155-2).